A 61-amino-acid polypeptide reads, in one-letter code: Sperm protamine P1 (61 aa).

Positions 1 to 61 (MARFRRSRSR…RSSRRSRRRN (61 aa)) are disordered.

Belongs to the protamine P1 family. As to expression, testis.

It localises to the nucleus. It is found in the chromosome. Functionally, protamines substitute for histones in the chromatin of sperm during the haploid phase of spermatogenesis. They compact sperm DNA into a highly condensed, stable and inactive complex. The chain is Sperm protamine P1 (PRM1) from Ornithorhynchus anatinus (Duckbill platypus).